The sequence spans 1262 residues: Collagen alpha-1(III) chain (1262 aa).

The signal sequence occupies residues 1 to 23 (MMSFVQKVSLFILAVFQPSVILA). The propeptide at 24–150 (QQDALGGCTH…PSISGGSFSP (127 aa)) is N-terminal propeptide. One can recognise a VWFC domain in the interval 29 to 88 (GGCTHLGQEYADRDVWKPEPCQICVCDSGSVLCDDIICDDQELDCPNPEIPLGECCPVCP). Disordered stretches follow at residues 95-143 (TELP…CPSI) and 160-1000 (GSVG…GGVA). The span at 102 to 118 (GPKGDPGSPGSPGRTGA) shows a compositional bias: low complexity. A compositionally biased stretch (pro residues) spans 119–134 (PGPPGQPGSPGAPGPP). Residues 145–164 (GGSFSPQYDSYDVKAGSVGM) are nonhelical region (N-terminal). Positions 165-994 (GYPPQPISGF…PGPSGPPGPC (830 aa)) are triple-helical region. Residues 167 to 190 (PPQPISGFPGPPGPSGPPGPPGHA) are compositionally biased toward pro residues. The span at 192 to 201 (PPGSNGYQGP) shows a compositional bias: low complexity. Residues 202-216 (PGEPGQPGPSGPPGP) show a composition bias toward pro residues. The segment covering 228-240 (KDGEPGRPGRNGD) has biased composition (basic and acidic residues). Low complexity predominate over residues 253–264 (PGMPGMPGMKGA). A 5-hydroxylysine modification is found at Lys-262. Basic and acidic residues predominate over residues 265–274 (RGFDGKDGAK). Composition is skewed to low complexity over residues 276–295 (DSGA…NGSP) and 339–376 (TAGF…QGQA). 5-hydroxylysine is present on Lys-283. Positions 389 to 414 (GSPGGKGEMGPSGIPGGPGPPGGRGL) are enriched in gly residues. Composition is skewed to low complexity over residues 534–549 (MRGL…SDGK) and 631–640 (PGPSGSPGLQ). The segment covering 641-650 (GLPGGPGPAG) has biased composition (gly residues). Over residues 672-684 (PKGENGIPGERGP) the composition is skewed to low complexity. A compositionally biased stretch (gly residues) spans 692–701 (GARGGPGPAG). Low complexity-rich tracts occupy residues 723–738 (LQGM…SPGP), 781–790 (TGPAGAPGPA), 802–817 (QGLP…PGQN), and 828–838 (PPGLRGEAGPP). A 5-hydroxylysine modification is found at Lys-859. Gly residues predominate over residues 863-872 (GSPGGPGAAG). Positions 895–904 (PGVPGPPGHP) are enriched in pro residues. Over residues 927-940 (PQGAIGSPGASGAR) the composition is skewed to low complexity. Over residues 976–993 (AGPPGQPGLPGPSGPPGP) the composition is skewed to pro residues. The tract at residues 995-1003 (CGGGVASLG) is nonhelical region (C-terminal). The propeptide at 1018–1262 (DEPKENEINL…GVDVGPVCFL (245 aa)) is C-terminal propeptide. The Fibrillar collagen NC1 domain occupies 1028–1262 (GEIMSSMKSI…GVDVGPVCFL (235 aa)). 3 disulfides stabilise this stretch: Cys-1058–Cys-1090, Cys-1098–Cys-1260, and Cys-1168–Cys-1213. Residues Asp-1076, Asn-1078, Gln-1079, Cys-1081, and Asp-1084 each coordinate Ca(2+). N-linked (GlcNAc...) asparagine glycosylation occurs at Asn-1163.

Belongs to the fibrillar collagen family. In terms of assembly, trimers of identical alpha 1(III) chains. The chains are linked to each other by interchain disulfide bonds. Trimers are also cross-linked via hydroxylysines. In terms of processing, prolines at the third position of the tripeptide repeating unit (G-X-Y) are hydroxylated in some or all of the chains.

It is found in the secreted. The protein resides in the extracellular space. Its subcellular location is the extracellular matrix. Collagen type III occurs in most soft connective tissues along with type I collagen. The polypeptide is Collagen alpha-1(III) chain (COL3A1) (Gallus gallus (Chicken)).